We begin with the raw amino-acid sequence, 510 residues long: NAD(P)H-quinone oxidoreductase subunit 2 A, chloroplastic (510 aa).

A run of 13 helical transmembrane segments spans residues 26-46 (LFDG…ILLL), 57-77 (IPWF…ALLF), 99-119 (IFQF…VEYI), 124-144 (MAIT…MFLC), 149-169 (LITI…LSGY), 183-203 (YLLM…WLYG), 227-247 (PGIS…LSPA), 295-315 (WHPL…LIAI), 323-342 (MLAY…IIVG), 354-374 (YMLF…LFGL), 395-415 (ALSL…AGFF), 418-438 (LHLF…IGLF), and 484-504 (MIVC…IIAI).

The protein belongs to the complex I subunit 2 family. NDH is composed of at least 16 different subunits, 5 of which are encoded in the nucleus.

The protein localises to the plastid. The protein resides in the chloroplast thylakoid membrane. It catalyses the reaction a plastoquinone + NADH + (n+1) H(+)(in) = a plastoquinol + NAD(+) + n H(+)(out). The enzyme catalyses a plastoquinone + NADPH + (n+1) H(+)(in) = a plastoquinol + NADP(+) + n H(+)(out). Its function is as follows. NDH shuttles electrons from NAD(P)H:plastoquinone, via FMN and iron-sulfur (Fe-S) centers, to quinones in the photosynthetic chain and possibly in a chloroplast respiratory chain. The immediate electron acceptor for the enzyme in this species is believed to be plastoquinone. Couples the redox reaction to proton translocation, and thus conserves the redox energy in a proton gradient. This chain is NAD(P)H-quinone oxidoreductase subunit 2 A, chloroplastic, found in Oenothera biennis (German evening primrose).